Consider the following 141-residue polypeptide: Lysozyme 1 (141 aa).

Residues 1–19 (MKFFIVLVAALALAAPAMG) form the signal peptide. Residues 20–141 (KTFTRCSLAR…GSLPSINDCF (122 aa)) enclose the C-type lysozyme domain. 4 cysteine pairs are disulfide-bonded: cysteine 25/cysteine 140, cysteine 46/cysteine 130, cysteine 81/cysteine 97, and cysteine 93/cysteine 111. Glutamate 51 is an active-site residue. Asparagine 65 is a glycosylation site (N-linked (GlcNAc...) asparagine). Residue aspartate 69 is part of the active site. An N-linked (GlcNAc...) asparagine glycan is attached at asparagine 104.

Belongs to the glycosyl hydrolase 22 family.

It carries out the reaction Hydrolysis of (1-&gt;4)-beta-linkages between N-acetylmuramic acid and N-acetyl-D-glucosamine residues in a peptidoglycan and between N-acetyl-D-glucosamine residues in chitodextrins.. Its function is as follows. May not function as a self-defense protein, but as a digestive enzyme, probably in the gut of the insect body. Inactive towards Micrococcus luteus. Active toward glycol chitin. The polypeptide is Lysozyme 1 (Musca domestica (House fly)).